The primary structure comprises 91 residues: Large ribosomal subunit protein uL23 (91 aa).

It belongs to the universal ribosomal protein uL23 family. As to quaternary structure, part of the 50S ribosomal subunit. Contacts protein L29, and trigger factor when it is bound to the ribosome.

In terms of biological role, one of the early assembly proteins it binds 23S rRNA. One of the proteins that surrounds the polypeptide exit tunnel on the outside of the ribosome. Forms the main docking site for trigger factor binding to the ribosome. In Macrococcus caseolyticus (strain JCSC5402) (Macrococcoides caseolyticum), this protein is Large ribosomal subunit protein uL23.